Reading from the N-terminus, the 1391-residue chain is DNA-directed RNA polymerase subunit beta' (1391 aa).

Zn(2+) is bound by residues Cys-72, Cys-74, Cys-87, and Cys-90. Residues Asp-462, Asp-464, and Asp-466 each contribute to the Mg(2+) site. The Zn(2+) site is built by Cys-816, Cys-890, Cys-897, and Cys-900.

This sequence belongs to the RNA polymerase beta' chain family. In terms of assembly, the RNAP catalytic core consists of 2 alpha, 1 beta, 1 beta' and 1 omega subunit. When a sigma factor is associated with the core the holoenzyme is formed, which can initiate transcription. It depends on Mg(2+) as a cofactor. Zn(2+) serves as cofactor.

The catalysed reaction is RNA(n) + a ribonucleoside 5'-triphosphate = RNA(n+1) + diphosphate. In terms of biological role, DNA-dependent RNA polymerase catalyzes the transcription of DNA into RNA using the four ribonucleoside triphosphates as substrates. The protein is DNA-directed RNA polymerase subunit beta' of Neisseria meningitidis serogroup B (strain ATCC BAA-335 / MC58).